A 359-amino-acid chain; its full sequence is CMP-N-acetylneuraminate-poly-alpha-2,8-sialyltransferase (359 aa).

Topologically, residues 1–7 (MRSIRKR) are cytoplasmic. The helical; Signal-anchor for type II membrane protein transmembrane segment at 8 to 20 (WTICTISLLLIFY) threads the bilayer. Residues 21–359 (KTKEMARTEE…KLTTGKCIKQ (339 aa)) lie on the Lumenal side of the membrane. N-linked (GlcNAc...) asparagine glycosylation is found at asparagine 50, asparagine 74, and asparagine 119. Disulfide bonds link cysteine 142-cysteine 292 and cysteine 156-cysteine 356. 2 residues coordinate CMP-N-acetyl-beta-neuraminate: asparagine 147 and asparagine 170. Asparagine 204 and asparagine 219 each carry an N-linked (GlcNAc...) asparagine glycan. CMP-N-acetyl-beta-neuraminate-binding residues include serine 279, threonine 280, glycine 281, and tryptophan 301. Histidine 331 serves as the catalytic Proton donor/acceptor.

The protein belongs to the glycosyltransferase 29 family. In terms of processing, autopolysialylated.

It localises to the golgi apparatus membrane. The protein localises to the secreted. It catalyses the reaction [N-acetyl-alpha-D-neuraminosyl-(2-&gt;8)](n) + CMP-N-acetyl-beta-neuraminate = [N-acetyl-alpha-D-neuraminosyl-(2-&gt;8)](n+1) + CMP + H(+). Its function is as follows. Catalyzes the transfer of a sialic acid from a CMP-linked sialic acid donor onto a terminal alpha-2,3-, alpha-2,6-, or alpha-2,8-linked sialic acid of an N-linked glycan protein acceptor through alpha-2,8-linkages. Therefore, participates in polysialic acid synthesis on various sialylated N-acetyllactosaminyl oligosaccharides, including NCAM1 N-glycans, FETUB N-glycans and AHSG. It is noteworthy that alpha-2,3-linked sialic acid is apparently a better acceptor than alpha-2,6-linked sialic acid. The polypeptide is CMP-N-acetylneuraminate-poly-alpha-2,8-sialyltransferase (ST8SIA4) (Bos taurus (Bovine)).